A 2507-amino-acid polypeptide reads, in one-letter code: Putative neurobeachin homolog (2507 aa).

Disordered regions lie at residues 1 to 109, 1307 to 1377, and 1629 to 1649; these read MEIS…PPLP, PSSP…DGGR, and SRHEEANLPEGEKNEEPEISE. Residues 24 to 37 are compositionally biased toward acidic residues; that stretch reads PVEEGEEVNDEESN. Polar residues predominate over residues 1317–1340; the sequence is TTQKQENSENVNSETSPENGSNGK. The segment covering 1360-1372 has biased composition (acidic residues); it reads DGEEEENGEEGQG. Residues 1690–1798 form the BEACH-type PH domain; it reads PSSQSACFST…AVKKVVYQLP (109 aa). The BEACH domain occupies 1817-2106; the sequence is MTPRQLFKHS…QLLTEAHPPR (290 aa). WD repeat units lie at residues 2265–2308, 2326–2365, 2405–2444, and 2447–2486; these read GHGD…GFIA, GHEASISALCVSAEHGLVVSGCEDGVILIHTTSSDLLRRI, LVDDKIECVTVTRDGEFAVTGAVNGRINIWRMFPLTKLYT, and PLNSAVRSVAVVASHRFILGGLDSGAIVVFNADFNRWHYE.

This sequence belongs to the WD repeat neurobeachin family. As to quaternary structure, interacts with RII subunit of PKA. Expressed in vulval precursor cells and rectal epithelia in L2 and L3 larvae. In L4 larvae, expression is seen in intestinal epithelial cells.

The protein resides in the cytoplasm. Its subcellular location is the membrane. The protein localises to the nucleus. In terms of biological role, binds to type II regulatory subunits of protein kinase A and anchors/targets them to the membrane. May anchor the kinase to cytoskeletal and/or organelle-associated proteins. Regulates endosomal traffic in polarized epithelial cells such as the vulval precursor cells and intestinal cells. Thought to act as a negative regulator of lin-12 activity in vulval precursor cells. May have a role in the internalization process from basolateral surface of polarized epithelial cells. The sequence is that of Putative neurobeachin homolog (sel-2) from Caenorhabditis elegans.